The sequence spans 130 residues: MAKRVKRAGRKREKKHVERGIAHIHSTFNNTIVTITDPAGNTIAWASAGTVGFKGSRKSTPFAAQMAAESAAKAAMDHGMRTVDVYVKGPGAGREAAIRALQAAGLEVSLIKDVTPIPHNGCRPPKRRRV.

The protein belongs to the universal ribosomal protein uS11 family. As to quaternary structure, part of the 30S ribosomal subunit. Interacts with proteins S7 and S18. Binds to IF-3.

Functionally, located on the platform of the 30S subunit, it bridges several disparate RNA helices of the 16S rRNA. Forms part of the Shine-Dalgarno cleft in the 70S ribosome. In Caldanaerobacter subterraneus subsp. tengcongensis (strain DSM 15242 / JCM 11007 / NBRC 100824 / MB4) (Thermoanaerobacter tengcongensis), this protein is Small ribosomal subunit protein uS11.